We begin with the raw amino-acid sequence, 778 residues long: Subtilisin-like protease SBT3.6 (778 aa).

Positions 1–22 (MMNYRTSIYVVLSLVIFLNVQR) are cleaved as a signal peptide. Positions 23–113 (SFVAESSAKR…VIPDSFYKLA (91 aa)) are cleaved as a propeptide — activation peptide. In terms of domain architecture, Inhibitor I9 spans 34 to 113 (VHIVYLGEKQ…VIPDSFYKLA (80 aa)). Asn-69 carries an N-linked (GlcNAc...) asparagine glycan. Residues 117–625 (TWDYLGLSAA…GGLVNPEKSA (509 aa)) enclose the Peptidase S8 domain. Residue Asp-147 is the Charge relay system of the active site. Residues Asn-158, Asn-180, Asn-202, and Asn-206 are each glycosylated (N-linked (GlcNAc...) asparagine). The active-site Charge relay system is the His-222. N-linked (GlcNAc...) asparagine glycosylation is found at Asn-237, Asn-399, Asn-414, and Asn-541. The PA domain occupies 388 to 483 (SLVYPENPGN…ELGTDILLYT (96 aa)). Catalysis depends on Ser-556, which acts as the Charge relay system. N-linked (GlcNAc...) asparagine glycans are attached at residues Asn-648, Asn-724, and Asn-759.

Belongs to the peptidase S8 family.

Its subcellular location is the secreted. The sequence is that of Subtilisin-like protease SBT3.6 from Arabidopsis thaliana (Mouse-ear cress).